Reading from the N-terminus, the 487-residue chain is Keratin, type I cytoskeletal 12 (487 aa).

The tract at residues 1–118 (MSLSVCTSAL…GNDGGLLSGS (118 aa)) is head. Residues 119–154 (EKETMQNLNDRLASYLGKVRSLEEANAELENKIREW) are coil 1A. The IF rod domain maps to 119 to 433 (EKETMQNLND…RLLEGDSQGD (315 aa)). The interval 158–175 (RRTRDAGSQSDYSKYYPL) is linker 1. The tract at residues 176 to 267 (IEDLKNKIVS…KNHEEELQSF (92 aa)) is coil 1B. The tract at residues 268–290 (QAGGPGEVNVEMDAAPGVDLTKV) is linker 12. A coil 2 region spans residues 291-428 (LNEMRAQYEA…IETYRRLLEG (138 aa)). Positions 428-461 (GDSQGDGFDESSSLSVSKPQTPSVDSSKDPNKTR) are disordered. The interval 429-487 (DSQGDGFDESSSLSVSKPQTPSVDSSKDPNKTRKIKTVVQEIVNGEVVSSQVQELEEEM) is tail. The segment covering 437–452 (ESSSLSVSKPQTPSVD) has biased composition (polar residues).

Belongs to the intermediate filament family. In terms of assembly, heterotetramer of two type I and two type II keratins. Keratin-3 associates with keratin-12. As to expression, expressed in the corneal epithelium (at protein level). Also expressed in the suprabasal limbal epithelium of the cornea (at protein level).

Involved in corneal epithelium organization, integrity and corneal keratin expression. This chain is Keratin, type I cytoskeletal 12 (Krt12), found in Mus musculus (Mouse).